We begin with the raw amino-acid sequence, 685 residues long: Amino acid transporter heavy chain SLC3A1 (685 aa).

A compositionally biased stretch (basic and acidic residues) spans 1–10 (MDEDKGKRDP). The segment at 1–53 (MDEDKGKRDPIQMSLKGCRTNNGFVQNEDIPEQDPDPGSRDTPQPNAVSIPAP) is disordered. Topologically, residues 1-88 (MDEDKGKRDP…ARYRVPREIL (88 aa)) are cytoplasmic. A helical; Signal-anchor for type II membrane protein membrane pass occupies residues 89-109 (FWLTVVSVFLLIGATIAIIVI). At 110–685 (SPKCLDWWQA…SALDILYSSC (576 aa)) the chain is on the extracellular side. Asparagine 213 is a Ca(2+) binding site. N-linked (GlcNAc...) asparagine glycosylation is found at asparagine 213, asparagine 240, and asparagine 260. Residues cysteine 241 and cysteine 272 are joined by a disulfide bond. Residues aspartate 283, phenylalanine 317, leucine 318, and glutamate 320 each contribute to the Ca(2+) site. Asparagine 331 carries N-linked (GlcNAc...) asparagine glycosylation. Serine 385 carries the post-translational modification Phosphoserine. Residues asparagine 512 and asparagine 522 are each glycosylated (N-linked (GlcNAc...) asparagine). 2 disulfide bridges follow: cysteine 570/cysteine 666 and cysteine 673/cysteine 685.

Disulfide-linked heterodimer composed of the catalytic light subunit SLC7A9 and the heavy subunit SLC3A1. The heterodimer is the minimal functional unit. Assembles in non-covalently linked heterotetramers (dimers of heterodimers) and higher order oligomers; the oligomerization is mediated by SLC3A1 likely to prevent degradation in the endoplasmic reticulum and facilitate heteromer trafficking to the plasma membrane. Disulfide-linked heterodimer composed of the catalytic light subunit SLC7A13 and the heavy subunit SLC3A1. In terms of tissue distribution, expressed in the brush border membrane in the kidney (at protein level). Highly expressed in renal tubules in the outer stripe of the outer medulla and medullary ray (at protein level). Also detected in the renal cortex. More abundant in male than female kidneys.

It localises to the cell membrane. It is found in the apical cell membrane. Its function is as follows. Acts as a chaperone that facilitates biogenesis and trafficking of functional transporter heteromers to the plasma membrane. Associates with SLC7A9 to form a functional transporter complex that mediates the electrogenic exchange between cationic amino acids and neutral amino acids, with a stoichiometry of 1:1. SLC7A9-SLC3A1 transporter has system b(0,+)-like activity with high affinity for extracellular cationic amino acids and L-cystine and lower affinity for intracellular neutral amino acids. Substrate exchange is driven by high concentration of intracellular neutral amino acids and the intracellular reduction of L-cystine to L-cysteine. SLC7A9-SLC3A1 acts as a major transporter for reabsorption of L-cystine and dibasic amino acids across the brush border membrane in early proximal tubules. Associates with SLC7A13 to form a functional complex that transports anionic and neutral amino acids via exchange or facilitated diffusion. SLC7A13-SLC3A1 may act as a major transporter for L-cystine in late proximal tubules, ensuring its reabsorption from the luminal fluid in exchange for cytosolic L-glutamate or L-aspartate. This chain is Amino acid transporter heavy chain SLC3A1, found in Mus musculus (Mouse).